A 389-amino-acid polypeptide reads, in one-letter code: Na(+)/H(+) antiporter NhaA 1 (389 aa).

11 helical membrane-spanning segments follow: residues 14–34, 47–67, 87–107, 117–137, 146–166, 171–191, 197–217, 252–272, 280–300, 321–341, and 356–376; these read AGGI…NSPL, FGMS…FLLI, IFPA…YVAF, GWAI…ALLG, VFLL…IALF, LSTL…MLNA, LIWY…SGVH, VAFA…LEGV, MLPL…IFTF, IFAV…ISSL, and LGIL…LHVS.

The protein belongs to the NhaA Na(+)/H(+) (TC 2.A.33) antiporter family.

The protein resides in the cell inner membrane. The catalysed reaction is Na(+)(in) + 2 H(+)(out) = Na(+)(out) + 2 H(+)(in). Functionally, na(+)/H(+) antiporter that extrudes sodium in exchange for external protons. This is Na(+)/H(+) antiporter NhaA 1 from Vibrio vulnificus (strain CMCP6).